A 167-amino-acid chain; its full sequence is Crossover junction endodeoxyribonuclease RuvC (167 aa).

Catalysis depends on residues D11, E71, and D143. Residues D11, E71, and D143 each coordinate Mg(2+).

Belongs to the RuvC family. Homodimer which binds Holliday junction (HJ) DNA. The HJ becomes 2-fold symmetrical on binding to RuvC with unstacked arms; it has a different conformation from HJ DNA in complex with RuvA. In the full resolvosome a probable DNA-RuvA(4)-RuvB(12)-RuvC(2) complex forms which resolves the HJ. Mg(2+) is required as a cofactor.

The protein resides in the cytoplasm. It carries out the reaction Endonucleolytic cleavage at a junction such as a reciprocal single-stranded crossover between two homologous DNA duplexes (Holliday junction).. The RuvA-RuvB-RuvC complex processes Holliday junction (HJ) DNA during genetic recombination and DNA repair. Endonuclease that resolves HJ intermediates. Cleaves cruciform DNA by making single-stranded nicks across the HJ at symmetrical positions within the homologous arms, yielding a 5'-phosphate and a 3'-hydroxyl group; requires a central core of homology in the junction. The consensus cleavage sequence is 5'-(A/T)TT(C/G)-3'. Cleavage occurs on the 3'-side of the TT dinucleotide at the point of strand exchange. HJ branch migration catalyzed by RuvA-RuvB allows RuvC to scan DNA until it finds its consensus sequence, where it cleaves and resolves the cruciform DNA. The polypeptide is Crossover junction endodeoxyribonuclease RuvC (Hyphomonas neptunium (strain ATCC 15444)).